A 101-amino-acid polypeptide reads, in one-letter code: Protein Tat (101 aa).

Residues 1–12 are compositionally biased toward basic and acidic residues; the sequence is MDPVDPRLEPWK. Residues 1 to 20 form a disordered region; that stretch reads MDPVDPRLEPWKHPGSQPKA. The tract at residues 1–24 is interaction with human CREBBP; the sequence is MDPVDPRLEPWKHPGSQPKAACTS. Residues 1–48 form a transactivation region; sequence MDPVDPRLEPWKHPGSQPKAACTSCYCKKCCFHCQVCFTTKGLGISYG. Zn(2+)-binding residues include cysteine 22, cysteine 25, and cysteine 27. The segment at 22-37 is cysteine-rich; the sequence is CTSCYCKKCCFHCQVC. The residue at position 28 (lysine 28) is an N6-acetyllysine; by host PCAF. Positions 30, 33, 34, and 37 each coordinate Zn(2+). Residues 38 to 48 are core; sequence FTTKGLGISYG. Residues 48 to 57 show a composition bias toward basic residues; sequence GRKKRRQRRR. The disordered stretch occupies residues 48 to 101; it reads GRKKRRQRRRAPQDSQTHQVSLPKQPASQARGDPTGPKESKKKVERETETDPVD. The short motif at 49–57 is the Nuclear localization signal, RNA-binding (TAR), and protein transduction element; sequence RKKRRQRRR. The interval 49 to 86 is interaction with the host capping enzyme RNGTT; the sequence is RKKRRQRRRAPQDSQTHQVSLPKQPASQARGDPTGPKE. Residues lysine 50 and lysine 51 each carry the N6-acetyllysine; by host EP300 and GCN5L2 modification. Asymmetric dimethylarginine; by host PRMT6 is present on residues arginine 52 and arginine 53. Polar residues predominate over residues 60–75; the sequence is QDSQTHQVSLPKQPAS. Residue lysine 71 forms a Glycyl lysine isopeptide (Lys-Gly) (interchain with G-Cter in ubiquitin) linkage. The Cell attachment site motif lies at 78–80; the sequence is RGD. The span at 83–101 shows a compositional bias: basic and acidic residues; that stretch reads GPKESKKKVERETETDPVD.

This sequence belongs to the lentiviruses Tat family. As to quaternary structure, interacts with host CCNT1. Associates with the P-TEFb complex composed at least of Tat, P-TEFb (CDK9 and CCNT1), TAR RNA, RNA Pol II. Recruits the HATs CREBBP, TAF1/TFIID, EP300, PCAF and GCN5L2. Interacts with host KAT5/Tip60; this interaction targets the latter to degradation. Interacts with the host deacetylase SIRT1. Interacts with host capping enzyme RNGTT; this interaction stimulates RNGTT. Binds to host KDR, and to the host integrins ITGAV/ITGB3 and ITGA5/ITGB1. Interacts with host KPNB1/importin beta-1 without previous binding to KPNA1/importin alpha-1. Interacts with EIF2AK2. Interacts with host nucleosome assembly protein NAP1L1; this interaction may be required for the transport of Tat within the nucleus, since the two proteins interact at the nuclear rim. Interacts with host C1QBP/SF2P32; this interaction involves lysine-acetylated Tat. Interacts with the host chemokine receptors CCR2, CCR3 and CXCR4. Interacts with host DPP4/CD26; this interaction may trigger an anti-proliferative effect. Interacts with host LDLR. Interacts with the host extracellular matrix metalloproteinase MMP1. Interacts with host PRMT6; this interaction mediates Tat's methylation. Interacts with, and is ubiquitinated by MDM2/Hdm2. Interacts with host PSMC3 and HTATIP2. Interacts with STAB1; this interaction may overcome SATB1-mediated repression of IL2 and IL2RA (interleukin) in T cells by binding to the same domain than HDAC1. Interacts (when acetylated) with human CDK13, thereby increasing HIV-1 mRNA splicing and promoting the production of the doubly spliced HIV-1 protein Nef. Interacts with host TBP; this interaction modulates the activity of transcriptional pre-initiation complex. Interacts with host RELA. Interacts with host PLSCR1; this interaction negatively regulates Tat transactivation activity by altering its subcellular distribution. Post-translationally, asymmetrical arginine methylation by host PRMT6 seems to diminish the transactivation capacity of Tat and affects the interaction with host CCNT1. Acetylation by EP300, CREBBP, GCN5L2/GCN5 and PCAF regulates the transactivation activity of Tat. EP300-mediated acetylation of Lys-50 promotes dissociation of Tat from the TAR RNA through the competitive binding to PCAF's bromodomain. In addition, the non-acetylated Tat's N-terminus can also interact with PCAF. PCAF-mediated acetylation of Lys-28 enhances Tat's binding to CCNT1. Lys-50 is deacetylated by SIRT1. In terms of processing, polyubiquitination by host MDM2 does not target Tat to degradation, but activates its transactivation function and fosters interaction with CCNT1 and TAR RNA. Post-translationally, phosphorylated by EIF2AK2 on serine and threonine residues adjacent to the basic region important for TAR RNA binding and function. Phosphorylation of Tat by EIF2AK2 is dependent on the prior activation of EIF2AK2 by dsRNA.

It is found in the host nucleus. The protein localises to the host nucleolus. Its subcellular location is the host cytoplasm. The protein resides in the secreted. Functionally, transcriptional activator that increases RNA Pol II processivity, thereby increasing the level of full-length viral transcripts. Recognizes a hairpin structure at the 5'-LTR of the nascent viral mRNAs referred to as the transactivation responsive RNA element (TAR) and recruits the cyclin T1-CDK9 complex (P-TEFb complex) that will in turn hyperphosphorylate the RNA polymerase II to allow efficient elongation. The CDK9 component of P-TEFb and other Tat-activated kinases hyperphosphorylate the C-terminus of RNA Pol II that becomes stabilized and much more processive. Other factors such as HTATSF1/Tat-SF1, SUPT5H/SPT5, and HTATIP2 are also important for Tat's function. Besides its effect on RNA Pol II processivity, Tat induces chromatin remodeling of proviral genes by recruiting the histone acetyltransferases (HATs) CREBBP, EP300 and PCAF to the chromatin. This also contributes to the increase in proviral transcription rate, especially when the provirus integrates in transcriptionally silent region of the host genome. To ensure maximal activation of the LTR, Tat mediates nuclear translocation of NF-kappa-B by interacting with host RELA. Through its interaction with host TBP, Tat may also modulate transcription initiation. Tat can reactivate a latently infected cell by penetrating in it and transactivating its LTR promoter. In the cytoplasm, Tat is thought to act as a translational activator of HIV-1 mRNAs. In terms of biological role, extracellular circulating Tat can be endocytosed by surrounding uninfected cells via the binding to several surface receptors such as CD26, CXCR4, heparan sulfate proteoglycans (HSPG) or LDLR. Neurons are rarely infected, but they internalize Tat via their LDLR. Through its interaction with nuclear HATs, Tat is potentially able to control the acetylation-dependent cellular gene expression. Modulates the expression of many cellular genes involved in cell survival, proliferation or in coding for cytokines or cytokine receptors. Tat plays a role in T-cell and neurons apoptosis. Tat induced neurotoxicity and apoptosis probably contribute to neuroAIDS. Circulating Tat also acts as a chemokine-like and/or growth factor-like molecule that binds to specific receptors on the surface of the cells, affecting many cellular pathways. In the vascular system, Tat binds to ITGAV/ITGB3 and ITGA5/ITGB1 integrins dimers at the surface of endothelial cells and competes with bFGF for heparin-binding sites, leading to an excess of soluble bFGF. This Homo sapiens (Human) protein is Protein Tat.